A 173-amino-acid polypeptide reads, in one-letter code: Alpha-crystallin A chain (173 aa).

N-acetylmethionine is present on Met-1. The tract at residues 1–63 (MDVTIQHPWF…RTVLDSGISE (63 aa)) is required for complex formation with BFSP1 and BFSP2. At Gln-6 the chain carries Deamidated glutamine; partial. The residue at position 45 (Ser-45) is a Phosphoserine. A deamidated glutamine; partial mark is found at Gln-50 and Gln-90. Residues 52–162 (LFRTVLDSGI…SHSERAIPVS (111 aa)) form the sHSP domain. The residue at position 99 (Lys-99) is an N6-acetyllysine. His-100 contributes to the Zn(2+) binding site. A Deamidated asparagine; partial modification is found at Asn-101. Zn(2+) is bound by residues Glu-102 and His-107. Position 122 is a phosphoserine (Ser-122). Asn-123 is modified (deamidated asparagine; partial). A disulfide bridge connects residues Cys-131 and Cys-142. A Deamidated glutamine; partial modification is found at Gln-147. A disordered region spans residues 149–173 (GMDASHSERAIPVSREEKPSSAPSS). Residues 153–167 (SHSERAIPVSREEKP) show a composition bias toward basic and acidic residues. His-154 serves as a coordination point for Zn(2+). Ser-162 carries an O-linked (GlcNAc) serine glycan.

The protein belongs to the small heat shock protein (HSP20) family. In terms of assembly, heteromer composed of three CRYAA and one CRYAB subunits. Inter-subunit bridging via zinc ions enhances stability, which is crucial as there is no protein turn over in the lens. Can also form homodimers and homotetramers (dimers of dimers) which serve as the building blocks of homooligomers. Within homooligomers, the zinc-binding motif is created from residues of 3 different molecules. His-100 and Glu-102 from one molecule are ligands of the zinc ion, and His-107 and His-154 residues from additional molecules complete the site with tetrahedral coordination geometry. Part of a complex required for lens intermediate filament formation composed of BFSP1, BFSP2 and CRYAA. Post-translationally, undergoes age-dependent proteolytical cleavage at the C-terminus.

It localises to the cytoplasm. The protein resides in the nucleus. Functionally, contributes to the transparency and refractive index of the lens. In its oxidized form (absence of intramolecular disulfide bond), acts as a chaperone, preventing aggregation of various proteins under a wide range of stress conditions. Required for the correct formation of lens intermediate filaments as part of a complex composed of BFSP1, BFSP2 and CRYAA. The chain is Alpha-crystallin A chain (CRYAA) from Loxodonta africana (African elephant).